The following is a 306-amino-acid chain: Non-specific ribonucleoside hydrolase RihC (306 aa).

The active site involves histidine 235.

This sequence belongs to the IUNH family. RihC subfamily.

Hydrolyzes both purine and pyrimidine ribonucleosides with a broad-substrate specificity. The protein is Non-specific ribonucleoside hydrolase RihC of Salmonella typhi.